The following is a 305-amino-acid chain: Heterogeneous nuclear ribonucleoprotein A0 (305 aa).

Met-1 is subject to N-acetylmethionine. The region spanning 7-86 (CKLFIGGLNV…VELKRAVSRE (80 aa)) is the RRM 1 domain. A Phosphoserine modification is found at Ser-68. Lys-80 participates in a covalent cross-link: Glycyl lysine isopeptide (Lys-Gly) (interchain with G-Cter in SUMO2). Position 84 is a phosphoserine; by MAPKAPK2 (Ser-84). Residues Lys-96, Lys-98, Lys-99, and Lys-106 each participate in a glycyl lysine isopeptide (Lys-Gly) (interchain with G-Cter in SUMO2) cross-link. The RRM 2 domain occupies 98–175 (KKLFVGGLKG…HRVEVKKAVP (78 aa)). The residue at position 133 (Lys-133) is an N6-acetyllysine. Arg-139 is modified (omega-N-methylarginine). Glycyl lysine isopeptide (Lys-Gly) (interchain with G-Cter in SUMO2) cross-links involve residues Lys-154, Lys-159, Lys-172, and Lys-176. Disordered regions lie at residues 178–211 (DIHA…RDQN) and 265–305 (QSSY…GGSF). Composition is skewed to gly residues over residues 181 to 211 (AGGG…RDQN) and 272 to 284 (KSGG…GSWG). The residue at position 286 (Arg-286) is an Omega-N-methylarginine. Gly residues predominate over residues 292 to 305 (YRGGYGGGYGGGSF). Arg-293 bears the Asymmetric dimethylarginine; alternate mark. Residue Arg-293 is modified to Dimethylated arginine; alternate. An Omega-N-methylarginine; alternate modification is found at Arg-293.

Post-translationally, phosphorylated at Ser-84 by MAPKAPK2 in response to LPS treatment, promoting stabilization of GADD45A mRNA. Arg-293 is dimethylated, probably to asymmetric dimethylarginine.

Its subcellular location is the nucleus. Functionally, mRNA-binding component of ribonucleosomes. Specifically binds AU-rich element (ARE)-containing mRNAs. Involved in post-transcriptional regulation of cytokines mRNAs. In Mus musculus (Mouse), this protein is Heterogeneous nuclear ribonucleoprotein A0 (Hnrnpa0).